Reading from the N-terminus, the 354-residue chain is UDP-N-acetylglucosamine--N-acetylmuramyl-(pentapeptide) pyrophosphoryl-undecaprenol N-acetylglucosamine transferase (354 aa).

UDP-N-acetyl-alpha-D-glucosamine is bound by residues 11–13, Arg164, Ser194, and Gln289; that span reads TAG.

It belongs to the glycosyltransferase 28 family. MurG subfamily.

It localises to the cell membrane. The catalysed reaction is di-trans,octa-cis-undecaprenyl diphospho-N-acetyl-alpha-D-muramoyl-L-alanyl-D-glutamyl-meso-2,6-diaminopimeloyl-D-alanyl-D-alanine + UDP-N-acetyl-alpha-D-glucosamine = di-trans,octa-cis-undecaprenyl diphospho-[N-acetyl-alpha-D-glucosaminyl-(1-&gt;4)]-N-acetyl-alpha-D-muramoyl-L-alanyl-D-glutamyl-meso-2,6-diaminopimeloyl-D-alanyl-D-alanine + UDP + H(+). It participates in cell wall biogenesis; peptidoglycan biosynthesis. Functionally, cell wall formation. Catalyzes the transfer of a GlcNAc subunit on undecaprenyl-pyrophosphoryl-MurNAc-pentapeptide (lipid intermediate I) to form undecaprenyl-pyrophosphoryl-MurNAc-(pentapeptide)GlcNAc (lipid intermediate II). The polypeptide is UDP-N-acetylglucosamine--N-acetylmuramyl-(pentapeptide) pyrophosphoryl-undecaprenol N-acetylglucosamine transferase (Clostridium botulinum (strain ATCC 19397 / Type A)).